Reading from the N-terminus, the 660-residue chain is Macrolide export ATP-binding/permease protein MacB (660 aa).

Residues 10-248 (LVLENIVRKF…TDSQALYGKQ (239 aa)) form the ABC transporter domain. Position 46-53 (46-53 (GASGSGKS)) interacts with ATP. 4 helical membrane-spanning segments follow: residues 285–305 (FLTMLGVIIGIGAIIAMVALG), 532–552 (ILTLLVSSIAAISLIVGGIGV), 593–613 (VIGGGLGILFGMSIGGLFLLF), and 625–645 (SIILSLTFSTLIGVCFGFSPA).

Belongs to the ABC transporter superfamily. Macrolide exporter (TC 3.A.1.122) family. Homodimer.

The protein resides in the cell inner membrane. Functionally, non-canonical ABC transporter that contains transmembrane domains (TMD), which form a pore in the inner membrane, and an ATP-binding domain (NBD), which is responsible for energy generation. Confers resistance against macrolides. This is Macrolide export ATP-binding/permease protein MacB from Bartonella henselae (strain ATCC 49882 / DSM 28221 / CCUG 30454 / Houston 1) (Rochalimaea henselae).